The sequence spans 431 residues: STE20-related kinase adapter protein alpha (431 aa).

Phosphoserine occurs at positions 2 and 46. Positions 69–379 constitute a Protein kinase domain; the sequence is YELLTVIGKG…ASTLLNHSFF (311 aa). Residues 310-347 are disordered; sequence LTMSPSRSVANSGLSDSLTTSTPRPSNGDSPSHPYHRT. Residues 312–339 are compositionally biased toward polar residues; sequence MSPSRSVANSGLSDSLTTSTPRPSNGDS. T329 and T419 each carry phosphothreonine; by LKB1.

The protein belongs to the protein kinase superfamily. STE Ser/Thr protein kinase family. STE20 subfamily. Component of a trimeric complex composed of STK11/LKB1, STRAD (STRADA or STRADB) and CAB39/MO25 (CAB39/MO25alpha or CAB39L/MO25beta): the complex tethers STK11/LKB1 in the cytoplasm and stimulates its catalytic activity.

The protein localises to the nucleus. The protein resides in the cytoplasm. Its function is as follows. Pseudokinase which, in complex with CAB39/MO25 (CAB39/MO25alpha or CAB39L/MO25beta), binds to and activates STK11/LKB1. Adopts a closed conformation typical of active protein kinases and binds STK11/LKB1 as a pseudosubstrate, promoting conformational change of STK11/LKB1 in an active conformation. This Homo sapiens (Human) protein is STE20-related kinase adapter protein alpha (STRADA).